Reading from the N-terminus, the 157-residue chain is Endoribonuclease YbeY (157 aa).

Zn(2+) contacts are provided by His114, His118, and His124.

The protein belongs to the endoribonuclease YbeY family. It depends on Zn(2+) as a cofactor.

The protein localises to the cytoplasm. Single strand-specific metallo-endoribonuclease involved in late-stage 70S ribosome quality control and in maturation of the 3' terminus of the 16S rRNA. The polypeptide is Endoribonuclease YbeY (Salmonella paratyphi A (strain AKU_12601)).